A 496-amino-acid polypeptide reads, in one-letter code: Solute carrier family 2, facilitated glucose transporter member 3 (496 aa).

Over 1–10 the chain is Cytoplasmic; that stretch reads MGTQKVTPAL. Residues 11–32 form a helical membrane-spanning segment; that stretch reads IFAITVATIGSFQFGYNTGVIN. Residues 33-64 lie on the Extracellular side of the membrane; sequence APEKIIKEFINKTLTDKGNAPPSEVLLTSLWS. Asparagine 43 is a glycosylation site (N-linked (GlcNAc...) asparagine). Residues 65-85 form a helical membrane-spanning segment; the sequence is LSVAIFSVGGMIGSFSVGLFV. The Cytoplasmic segment spans residues 86–90; it reads NRFGR. Residues 91-111 traverse the membrane as a helical segment; the sequence is RNSMLIVNLLAVTGGCFMGLC. Topologically, residues 112-118 are extracellular; the sequence is KVAKSVE. A helical transmembrane segment spans residues 119–142; sequence MLILGRLIIGLFCGLCTGFVPMYI. The Cytoplasmic segment spans residues 143–153; that stretch reads GEISPTALRGA. Residues 154–174 traverse the membrane as a helical segment; sequence FGTLNQLGIVVGILVAQIFGL. Glutamine 159 is a binding site for D-glucose. The Extracellular portion of the chain corresponds to 175–183; the sequence is EFILGSEEL. Residues 184–204 traverse the membrane as a helical segment; the sequence is WPLLLGFTILPTILQSAALPF. The Cytoplasmic segment spans residues 205-269; that stretch reads CPESPRFLLI…LFRVSSYRQP (65 aa). Threonine 232 is subject to Phosphothreonine. Residues 270-290 form a helical membrane-spanning segment; the sequence is IIISIVLQLSQQLSGINAVFY. Residues 277-279 are important for selectivity against fructose; sequence QLS. D-glucose is bound by residues 280-281 and asparagine 286; that span reads QQ. The Extracellular portion of the chain corresponds to 291-304; sequence YSTGIFKDAGVQEP. Residues 305–325 traverse the membrane as a helical segment; it reads IYATIGAGVVNTIFTVVSLFL. Asparagine 315 serves as a coordination point for D-glucose. At 326-331 the chain is on the cytoplasmic side; that stretch reads VERAGR. Residues 332–352 traverse the membrane as a helical segment; sequence RTLHMIGLGGMAFCSTLMTVS. Residues 353 to 363 are Extracellular-facing; that stretch reads LLLKDNYNGMS. A helical transmembrane segment spans residues 364–389; the sequence is FVCIGAILVFVAFFEIGPGPIPWFIV. D-glucose-binding residues include glutamate 378 and tryptophan 386. The Cytoplasmic segment spans residues 390–399; sequence AELFSQGPRP. Residues 400–420 traverse the membrane as a helical segment; that stretch reads AAMAVAGCSNWTSNFLVGLLF. The Extracellular portion of the chain corresponds to 421 to 429; that stretch reads PSAAHYLGA. A helical membrane pass occupies residues 430 to 450; sequence YVFIIFTGFLITFLAFTFFKV. At 451-496 the chain is on the cytoplasmic side; that stretch reads PETRGRTFEDITRAFEGQAHGADRSGKDGVMEVNSIEPAKETTTNV. Phosphoserine is present on residues serine 475 and serine 485. Threonine 492 bears the Phosphothreonine mark.

This sequence belongs to the major facilitator superfamily. Sugar transporter (TC 2.A.1.1) family. Glucose transporter subfamily. As to quaternary structure, interacts with SMIM43; the interaction may promote SLC2A3-mediated glucose transport to meet the energy needs of mesendoderm differentiation.

It localises to the cell membrane. The protein localises to the perikaryon. Its subcellular location is the cell projection. It catalyses the reaction D-glucose(out) = D-glucose(in). The catalysed reaction is D-galactose(in) = D-galactose(out). With respect to regulation, deoxyglucose transport is inhibited by D-glucose, D-galactose and maltose. Galactose transport is inhibited by D-glucose and maltose. Its function is as follows. Facilitative glucose transporter. Can also mediate the uptake of various other monosaccharides across the cell membrane. Mediates the uptake of glucose, 2-deoxyglucose, galactose, mannose, xylose and fucose, and probably also dehydroascorbate. Does not mediate fructose transport. Required for mesendoderm differentiation. This Pongo abelii (Sumatran orangutan) protein is Solute carrier family 2, facilitated glucose transporter member 3.